Here is a 338-residue protein sequence, read N- to C-terminus: NADPH dehydrogenase (338 aa).

22-25 contacts FMN; the sequence is SPMC. Tyr-27 is a substrate binding site. FMN is bound by residues Ala-59 and Gln-101. Substrate is bound at residue 163–166; sequence HAAH. FMN is bound by residues Arg-214 and 306–307; that span reads GR.

The protein belongs to the NADH:flavin oxidoreductase/NADH oxidase family. NamA subfamily. As to quaternary structure, homotetramer. It depends on FMN as a cofactor.

The enzyme catalyses A + NADPH + H(+) = AH2 + NADP(+). Catalyzes the reduction of the double bond of an array of alpha,beta-unsaturated aldehydes and ketones. It also reduces the nitro group of nitroester and nitroaromatic compounds. It could have a role in detoxification processes. The chain is NADPH dehydrogenase from Listeria monocytogenes serovar 1/2a (strain ATCC BAA-679 / EGD-e).